The chain runs to 248 residues: Cell division protein FtsQ (248 aa).

The Cytoplasmic segment spans residues 1–4 (MGTR). A helical transmembrane segment spans residues 5-25 (LRALLGVLILLVLGGAGWLFL). Topologically, residues 26–248 (RWEPTLLPIR…RVAARAGNRR (223 aa)) are periplasmic. In terms of domain architecture, POTRA spans 32–101 (LPIRLIQIEG…DTLRVQVREY (70 aa)).

The protein belongs to the FtsQ/DivIB family. FtsQ subfamily. As to quaternary structure, part of a complex composed of FtsB, FtsL and FtsQ.

The protein localises to the cell inner membrane. Functionally, essential cell division protein. May link together the upstream cell division proteins, which are predominantly cytoplasmic, with the downstream cell division proteins, which are predominantly periplasmic. May control correct divisome assembly. This Allochromatium vinosum (strain ATCC 17899 / DSM 180 / NBRC 103801 / NCIMB 10441 / D) (Chromatium vinosum) protein is Cell division protein FtsQ.